A 402-amino-acid chain; its full sequence is Thyroid hormone receptor alpha (402 aa).

The interval 1–22 (MEQKPSTLDPLSEPEDTRWLDG) is disordered. A modulating region spans residues 1 to 50 (MEQKPSTLDPLSEPEDTRWLDGKRKRKSSQCLVKSSMSGYIPSYLDKDEQ). Ser-12 bears the Phosphoserine; by CK2 mark. Ser-28 is subject to Phosphoserine. Zn(2+) contacts are provided by Cys-51, Cys-54, Cys-68, Cys-71, Cys-89, Cys-95, Cys-105, and Cys-108. NR C4-type zinc fingers lie at residues 51–71 (CVVC…CAGC) and 89–113 (CKYD…FKKC). The segment at residues 51–125 (CVVCGDKATG…VGMAMDLVLY (75 aa)) is a DNA-binding region (nuclear receptor). An NR LBD domain is found at 161-402 (EEWELIHVVT…ELFPPLFLEV (242 aa)). Positions 226 and 275 each coordinate 3,3',5-triiodo-L-thyronine.

The protein belongs to the nuclear hormone receptor family. NR1 subfamily. Probably interacts with SFPQ.

It localises to the nucleus. Its function is as follows. Nuclear hormone receptor that can act as a repressor or activator of transcription. High affinity receptor for thyroid hormones, including triiodothyronine and thyroxine. The protein is Thyroid hormone receptor alpha (THRA) of Pygoscelis adeliae (Adelie penguin).